A 66-amino-acid polypeptide reads, in one-letter code: Large ribosomal subunit protein bL35 (66 aa).

Composition is skewed to basic residues over residues 1–16 (MPKQ…RVKR) and 23–45 (KRGR…RQLR). The segment at 1–53 (MPKQKTHRGLAKRVKRTGGGGLKRGRAFTSHRFHGKTKKQRRQLRKASMVAKG) is disordered.

The protein belongs to the bacterial ribosomal protein bL35 family.

This is Large ribosomal subunit protein bL35 from Enterococcus faecalis (strain ATCC 700802 / V583).